The following is a 498-amino-acid chain: Pre-glycoprotein polyprotein GP complex (498 aa).

Residue Gly-2 is the site of N-myristoyl glycine; by host attachment. The Extracellular portion of the chain corresponds to 2–17 (GQIVTMFEALPHIIDE). A helical membrane pass occupies residues 18–33 (VINIVIIVLIIITSIK). Topologically, residues 34–58 (AVYNFATCGILALVSFLFLAGRSCG) are cytoplasmic. Zn(2+) is bound at residue Cys-57. Over 59 to 438 (MYGLNGPDIY…QGSTPLALMD (380 aa)) the chain is Extracellular. N-linked (GlcNAc...) asparagine; by host glycosylation is found at Asn-85, Asn-95, Asn-114, Asn-124, and Asn-171. Cystine bridges form between Cys-92–Cys-239, Cys-123–Cys-160, Cys-184–Cys-220, Cys-285–Cys-298, Cys-307–Cys-316, and Cys-370–Cys-391. N-linked (GlcNAc...) asparagine; by host glycosylation occurs at Asn-232. N-linked (GlcNAc...) asparagine; by host glycosylation is found at Asn-371, Asn-396, and Asn-401. A helical transmembrane segment spans residues 439-459 (LLMFSTSAYLISIFLHFVRIP). At 460-498 (THRHIKGGSCPKPHRLTNKGICSCGAFKVPGVKTIWKRR) the chain is on the cytoplasmic side. The Zn(2+) site is built by His-461, His-463, Cys-469, His-473, Cys-481, and Cys-483.

Belongs to the arenaviridae GPC protein family. In terms of assembly, interacts with glycoprotein G2. Part of the GP complex (GP-C) together with glycoprotein G1 and glycoprotein G2. The GP-complex interacts with protein Z, which interacts with ribonucleocapsid; these interactions may induce virion budding. Homotrimer; disulfide-linked. In pre-fusion state, G1 homotrimers bind G2 homotrimers via ionic interactions. Part of the GP complex (GP-C) together with glycoprotein G2 and the stable signal peptide. Interacts with the primary host receptor DAG1 on the cell surface. The GP-complex interacts with protein Z, which interacts with ribonucleocapsid; these interactions may induce virion budding. As to quaternary structure, homotrimer. Interacts with the stable signal peptide. In pre-fusion state, G2 homotrimers bind G1 homotrimers via ionic interactions. Part of the GP complex (GP-C) together with glycoprotein G1 and the stable signal peptide. Acidification in the endosome triggers rearrangements, which ultimately leads to a 6 helix bundle formed by the two heptad repeat domains (HR1 and HR2) in post-fusion state. The GP-complex interacts with protein Z, which interacts with ribonucleocapsid; these interactions may induce virion budding. Specific enzymatic cleavages in vivo yield mature proteins. GP-C polyprotein is cleaved in the endoplasmic reticulum by the host protease MBTPS1. Only cleaved glycoprotein is incorporated into virions. Post-translationally, the SSP remains stably associated with the GP complex following cleavage by signal peptidase and plays crucial roles in the trafficking of GP through the secretory pathway. In terms of processing, myristoylation is necessary for GP2-mediated fusion activity.

The protein localises to the virion membrane. It localises to the host endoplasmic reticulum membrane. The protein resides in the host Golgi apparatus membrane. Its subcellular location is the host cell membrane. Functions as a cleaved signal peptide that is retained as the third component of the GP complex (GP-C). Helps to stabilize the spike complex in its native conformation. The SSP is required for efficient glycoprotein expression, post-translational maturation cleavage of G1 and G2, glycoprotein transport to the cell surface plasma membrane, formation of infectious virus particles, and acid pH-dependent glycoprotein-mediated cell fusion. In terms of biological role, forms the virion spikes together with glycoprotein G2. The glycoprotein spike trimers are connected to the underlying matrix. Interacts with the host receptor. Mediates virus attachment to the host primary receptor alpha-dystroglycan DAG1 (alpha-DG) at the cell surface. Down-modulates host DAG1. Functionally, forms the virion spikes together with glycoprotein G1. The glycoprotein spike trimers are connected to the underlying matrix. Class I viral fusion protein that directs fusion of viral and host endosomal membranes, leading to delivery of the nucleocapsid into the cytoplasm. Membrane fusion is mediated by irreversible conformational changes induced by acidification. The polypeptide is Pre-glycoprotein polyprotein GP complex (Homo sapiens (Human)).